Consider the following 499-residue polypeptide: Probable cytosol aminopeptidase (499 aa).

Residues Lys269 and Asp274 each coordinate Mn(2+). Residue Lys281 is part of the active site. Mn(2+)-binding residues include Asp292, Asp351, and Glu353. The active site involves Arg355.

It belongs to the peptidase M17 family. The cofactor is Mn(2+).

It is found in the cytoplasm. The enzyme catalyses Release of an N-terminal amino acid, Xaa-|-Yaa-, in which Xaa is preferably Leu, but may be other amino acids including Pro although not Arg or Lys, and Yaa may be Pro. Amino acid amides and methyl esters are also readily hydrolyzed, but rates on arylamides are exceedingly low.. It carries out the reaction Release of an N-terminal amino acid, preferentially leucine, but not glutamic or aspartic acids.. Presumably involved in the processing and regular turnover of intracellular proteins. Catalyzes the removal of unsubstituted N-terminal amino acids from various peptides. The protein is Probable cytosol aminopeptidase of Actinobacillus pleuropneumoniae serotype 5b (strain L20).